Consider the following 522-residue polypeptide: Maturase K (522 aa).

It belongs to the intron maturase 2 family. MatK subfamily.

The protein localises to the plastid. The protein resides in the chloroplast. Its function is as follows. Usually encoded in the trnK tRNA gene intron. Probably assists in splicing its own and other chloroplast group II introns. This is Maturase K from Iris domestica (Leopard lily).